A 435-amino-acid chain; its full sequence is Nucleoredoxin (435 aa).

Ser2 carries the N-acetylserine modification. Residues 167 to 314 (PKPFREVIAG…FPWHPKPVLE (148 aa)) form the Thioredoxin domain.

This sequence belongs to the nucleoredoxin family. Associates with the phosphatase 2A holoenzyme. Interacts with PPP2CA; the interaction is direct. Interacts with DVL1 (via PDZ domain); the interaction is direct and regulated by oxidative stress. In terms of tissue distribution, widely expressed with higher expression in testis and skin.

Its subcellular location is the cytoplasm. It localises to the cytosol. The protein resides in the nucleus. It carries out the reaction [protein]-dithiol + NAD(+) = [protein]-disulfide + NADH + H(+). It catalyses the reaction [protein]-dithiol + NADP(+) = [protein]-disulfide + NADPH + H(+). Its function is as follows. Functions as a redox-dependent negative regulator of the Wnt signaling pathway, possibly by preventing ubiquitination of DVL3 by the BCR(KLHL12) complex. May also function as a transcriptional regulator act as a regulator of protein phosphatase 2A (PP2A). The protein is Nucleoredoxin (Nxn) of Mus musculus (Mouse).